Consider the following 129-residue polypeptide: Large ribosomal subunit protein bL20 (129 aa).

This sequence belongs to the bacterial ribosomal protein bL20 family.

Its function is as follows. Binds directly to 23S ribosomal RNA and is necessary for the in vitro assembly process of the 50S ribosomal subunit. It is not involved in the protein synthesizing functions of that subunit. The protein is Large ribosomal subunit protein bL20 of Mycolicibacterium smegmatis (strain ATCC 700084 / mc(2)155) (Mycobacterium smegmatis).